The following is a 433-amino-acid chain: Inorganic triphosphatase (433 aa).

Residues 2 to 202 form the CYTH domain; the sequence is AQEIELKFIV…ARGYHLAQGN (201 aa). The CHAD domain occupies 218–433; the sequence is KADVEQGLEA…EPFWLHSGKR (216 aa).

It catalyses the reaction triphosphate + H2O = phosphate + diphosphate. Inhibited by calcium ion and activated by magnesium ion. Its function is as follows. Involved in the hydrolysis of the beta-gamma-phosphoanhydride linkage of triphosphate-containing substrates (inorganic or nucleoside-linked). Catalyzes the hydrolysis of inorganic triphosphate (PPPi), which could be cytotoxic because of its high affinity for calcium ion, thereby interfering with calcium signaling. It also hydrolyzes slowly thiamine triphosphate (ThTP). YgiF is a specific PPPase, but it contributes only marginally to the total PPPase activity in E.coli, where the main enzyme responsible for hydrolysis of PPPi is inorganic pyrophosphatase (PPase). The chain is Inorganic triphosphatase (ygiF) from Escherichia coli (strain K12).